Consider the following 159-residue polypeptide: Major allergen Mal d 1 (159 aa).

Belongs to the BetVI family.

The protein is Major allergen Mal d 1 of Malus domestica (Apple).